Here is a 350-residue protein sequence, read N- to C-terminus: tRNA N6-adenosine threonylcarbamoyltransferase (350 aa).

Fe cation contacts are provided by His-109 and His-113. Substrate is bound by residues 136–140, Asp-169, Gly-182, Asp-186, and Asn-284; that span reads TVSGG. Fe cation is bound at residue Asp-312.

The protein belongs to the KAE1 / TsaD family. It depends on Fe(2+) as a cofactor.

The protein resides in the cytoplasm. It catalyses the reaction L-threonylcarbamoyladenylate + adenosine(37) in tRNA = N(6)-L-threonylcarbamoyladenosine(37) in tRNA + AMP + H(+). In terms of biological role, required for the formation of a threonylcarbamoyl group on adenosine at position 37 (t(6)A37) in tRNAs that read codons beginning with adenine. Is involved in the transfer of the threonylcarbamoyl moiety of threonylcarbamoyl-AMP (TC-AMP) to the N6 group of A37, together with TsaE and TsaB. TsaD likely plays a direct catalytic role in this reaction. The chain is tRNA N6-adenosine threonylcarbamoyltransferase from Chlorobium chlorochromatii (strain CaD3).